Consider the following 338-residue polypeptide: Flap endonuclease 1 (338 aa).

Residues 1–98 (MGVNLSSILI…ETLRERSLIK (98 aa)) form an N-domain region. The Mg(2+) site is built by Asp-27, Asp-80, Glu-152, Glu-154, Asp-173, Asp-175, and Asp-236. Positions 116–257 (KIRSLSSRIN…TALSLIKKYN (142 aa)) are I-domain. An interaction with PCNA region spans residues 330–338 (HQSSLDRFF).

This sequence belongs to the XPG/RAD2 endonuclease family. FEN1 subfamily. As to quaternary structure, interacts with PCNA. PCNA stimulates the nuclease activity without altering cleavage specificity. The cofactor is Mg(2+).

Functionally, structure-specific nuclease with 5'-flap endonuclease and 5'-3' exonuclease activities involved in DNA replication and repair. During DNA replication, cleaves the 5'-overhanging flap structure that is generated by displacement synthesis when DNA polymerase encounters the 5'-end of a downstream Okazaki fragment. Binds the unpaired 3'-DNA end and kinks the DNA to facilitate 5' cleavage specificity. Cleaves one nucleotide into the double-stranded DNA from the junction in flap DNA, leaving a nick for ligation. Also involved in the base excision repair (BER) pathway. Acts as a genome stabilization factor that prevents flaps from equilibrating into structures that lead to duplications and deletions. Also possesses 5'-3' exonuclease activity on nicked or gapped double-stranded DNA. The sequence is that of Flap endonuclease 1 from Picrophilus torridus (strain ATCC 700027 / DSM 9790 / JCM 10055 / NBRC 100828 / KAW 2/3).